The primary structure comprises 309 residues: Protein FdhE homolog (309 aa).

This sequence belongs to the FdhE family.

The protein resides in the cytoplasm. Necessary for formate dehydrogenase activity. The polypeptide is Protein FdhE homolog (Cronobacter sakazakii (strain ATCC BAA-894) (Enterobacter sakazakii)).